We begin with the raw amino-acid sequence, 626 residues long: tRNA 5-methylaminomethyl-2-thiouridine biosynthesis bifunctional protein MnmC (626 aa).

Positions 1–237 are tRNA (mnm(5)s(2)U34)-methyltransferase; it reads MKGPQLDYAD…KRDMTVGVFQ (237 aa). Residues 255–626 form an FAD-dependent cmnm(5)s(2)U34 oxidoreductase region; that stretch reads IGSGLSGANV…RVLPNRFSQE (372 aa).

This sequence in the N-terminal section; belongs to the methyltransferase superfamily. tRNA (mnm(5)s(2)U34)-methyltransferase family. In the C-terminal section; belongs to the DAO family. It depends on FAD as a cofactor.

Its subcellular location is the cytoplasm. It catalyses the reaction 5-aminomethyl-2-thiouridine(34) in tRNA + S-adenosyl-L-methionine = 5-methylaminomethyl-2-thiouridine(34) in tRNA + S-adenosyl-L-homocysteine + H(+). Catalyzes the last two steps in the biosynthesis of 5-methylaminomethyl-2-thiouridine (mnm(5)s(2)U) at the wobble position (U34) in tRNA. Catalyzes the FAD-dependent demodification of cmnm(5)s(2)U34 to nm(5)s(2)U34, followed by the transfer of a methyl group from S-adenosyl-L-methionine to nm(5)s(2)U34, to form mnm(5)s(2)U34. The polypeptide is tRNA 5-methylaminomethyl-2-thiouridine biosynthesis bifunctional protein MnmC (Hahella chejuensis (strain KCTC 2396)).